The primary structure comprises 86 residues: Large ribosomal subunit protein bL31B (86 aa).

It belongs to the bacterial ribosomal protein bL31 family. Type B subfamily. As to quaternary structure, part of the 50S ribosomal subunit.

The sequence is that of Large ribosomal subunit protein bL31B from Streptococcus equi subsp. equi (strain 4047).